A 139-amino-acid chain; its full sequence is FNPCPYSDDTVKMIILTEQNKKQDFYTLDTIGEHNQFNKLTAKSQVVFIVWQTGIGDAITARAASGLAMLVDKYQMAPVASDIKLCNAGCYCRPTAIQFAWEHKCVGIRCSDPGVPTDGLSGRPHYGETLHKVRSYNGK.

As to expression, expressed by the venom gland.

The protein localises to the secreted. It carries out the reaction a 1,2-diacyl-sn-glycero-3-phosphocholine + H2O = a 1-acyl-sn-glycero-3-phosphocholine + a fatty acid + H(+). Has a highly toxic phospholipase A2 activity. This Vespa orientalis (Oriental hornet) protein is Orientotoxin-2.